The primary structure comprises 72 residues: DNA-directed RNA polymerase subunit omega (72 aa).

This sequence belongs to the RNA polymerase subunit omega family. As to quaternary structure, the RNAP catalytic core consists of 2 alpha, 1 beta, 1 beta' and 1 omega subunit. When a sigma factor is associated with the core the holoenzyme is formed, which can initiate transcription.

It catalyses the reaction RNA(n) + a ribonucleoside 5'-triphosphate = RNA(n+1) + diphosphate. Functionally, promotes RNA polymerase assembly. Latches the N- and C-terminal regions of the beta' subunit thereby facilitating its interaction with the beta and alpha subunits. This Laribacter hongkongensis (strain HLHK9) protein is DNA-directed RNA polymerase subunit omega.